Consider the following 164-residue polypeptide: MNPQREAAPKSYAIRDSRQMVWVLSGNSLIAAPLSRSIKPVTLHLIACRDTEFSDKEKGNMVYLGIKGKDLCLFCAEIQGKPTLQLKLQGSQDNIGKDTCWKLVGIHTCINLDVRESCFMGTLDQWGIGVGRKKWKSSFQHHHLRKKDKDFSSMRTNIGMPGRM.

A propeptide spanning residues 1–4 (MNPQ) is cleaved from the precursor.

The protein belongs to the IL-1 family. Interacts with cargo receptor TMED10; the interaction mediates the translocation from the cytoplasm into the ERGIC (endoplasmic reticulum-Golgi intermediate compartment) and thereby secretion. In terms of processing, N-terminal truncation leads to a dramatic enhancement of its activity (&gt;1000-fold). As to expression, expression at low levels in tonsil, bone marrow, heart, placenta, lung, testis and colon but not in any hematopoietic cell lines. Not detected in adipose tissue. Expressed at higher levels in psoriatic plaques than in symptomless psoriatic skin or healthy control skin. Increased levels are not detected in inflamed joint tissue.

Its subcellular location is the cytoplasm. It is found in the secreted. Its function is as follows. Cytokine that binds to and signals through the IL1RL2/IL-36R receptor which in turn activates NF-kappa-B and MAPK signaling pathways in target cells linked to a pro-inflammatory response. Part of the IL-36 signaling system that is thought to be present in epithelial barriers and to take part in local inflammatory response; similar to the IL-1 system with which it shares the coreceptor IL1RAP. Stimulates production of interleukin-6 and interleukin-8 in synovial fibrobasts, articular chondrocytes and mature adipocytes. Induces expression of a number of antimicrobial peptides including beta-defensins 4 and 103 as well as a number of matrix metalloproteases. Seems to be involved in skin inflammatory response by acting on keratinocytes, dendritic cells and indirectly on T-cells to drive tissue infiltration, cell maturation and cell proliferation. In cultured keratinocytes induces the expression of macrophage, T-cell, and neutrophil chemokines, such as CCL3, CCL4, CCL5, CCL2, CCL17, CCL22, CL20, CCL5, CCL2, CCL17, CCL22, CXCL8, CCL20 and CXCL1, and the production of pro-inflammatory cytokines such as TNF-alpha, IL-8 and IL-6. The polypeptide is Interleukin-36 beta (Homo sapiens (Human)).